The sequence spans 637 residues: Biosynthetic arginine decarboxylase (637 aa).

Residue Lys-101 is modified to N6-(pyridoxal phosphate)lysine. 286–296 (FDVGGGLAVDY) provides a ligand contact to substrate.

Belongs to the Orn/Lys/Arg decarboxylase class-II family. SpeA subfamily. Mg(2+) serves as cofactor. The cofactor is pyridoxal 5'-phosphate.

It carries out the reaction L-arginine + H(+) = agmatine + CO2. It functions in the pathway amine and polyamine biosynthesis; agmatine biosynthesis; agmatine from L-arginine: step 1/1. Functionally, catalyzes the biosynthesis of agmatine from arginine. This is Biosynthetic arginine decarboxylase from Shewanella baltica (strain OS195).